Here is a 2871-residue protein sequence, read N- to C-terminus: Fibrillin-1 (2871 aa).

The N-terminal stretch at 1–24 (MRRGRLLEIALGFTVLLASYTSHG) is a signal peptide. A propeptide spanning residues 25–44 (ADANLEAGNVKETRASRAKR) is cleaved from the precursor. The fibrillin unique N-terminal (FUN) domain stretch occupies residues 45–81 (RGGGGHDALKGPNVCGSRYNAYCCPGWKTLPGGNQCI). The segment at 45–450 (RGGGGHDALK…PPRVLPVNVT (406 aa)) is N-terminal domain. Cystine bridges form between Cys59–Cys68, Cys67–Cys80, Cys85–Cys94, Cys89–Cys100, Cys102–Cys111, Cys119–Cys129, Cys123–Cys134, Cys136–Cys145, Cys150–Cys160, Cys154–Cys166, and Cys168–Cys177. 3 EGF-like domains span residues 81-112 (IVPI…PSCG), 115-146 (SIQH…THCG), and 147-178 (QPVC…PQCE). The segment at 119–329 (CNIRCMNGGS…YTSPDGTRCI (211 aa)) is interaction with MFAP4. The TB 1 domain maps to 184-236 (GPCFTVISNQMCQGQLSGIVCTKTLCCATVGRAWGHPCEMCPAQPHPCRRGFI). The tract at residues 195-221 (CQGQLSGIVCTKTLCCATVGRAWGHPC) is hybrid domain 1. Residues 246–287 (DVDECQAIPGLCQGGNCINTVGSFECKCPAGHKLNEVSQKCE) enclose the EGF-like 4; calcium-binding domain. Disulfide bonds link Cys250–Cys262, Cys257–Cys271, Cys273–Cys286, Cys292–Cys304, Cys299–Cys313, and Cys315–Cys328. An O-linked (Glc) serine glycan is attached at Ser268. One can recognise an EGF-like 5; calcium-binding domain in the interval 288-329 (DIDECSTIPGICEGGECTNTVSSYFCKCPPGFYTSPDGTRCI). In terms of domain architecture, TB 2 spans 334 to 389 (GYCYTALTNGRCSNQLPQSITKMQCCCDAGRCWSPGVTVAPEMCPIRATEDFNKLC). The N-linked (GlcNAc...) asparagine glycan is linked to Asn448. Residues 449–489 (VTDYCQLVRYLCQNGRCIPTPGSYRCECNKGFQLDLRGECI) enclose the EGF-like 6 domain. 15 disulfides stabilise this stretch: Cys453–Cys465, Cys460–Cys474, Cys476–Cys488, Cys494–Cys504, Cys499–Cys513, Cys515–Cys528, Cys534–Cys546, Cys541–Cys555, Cys557–Cys570, Cys576–Cys587, Cys582–Cys596, Cys598–Cys611, Cys617–Cys628, Cys623–Cys637, and Cys639–Cys652. Residue Ser471 is glycosylated (O-linked (Glc) serine). In terms of domain architecture, EGF-like 7; calcium-binding spans 490-529 (DVDECEKNPCAGGECINNQGSYTCQCRAGYQSTLTRTECR). The O-linked (Glc) serine glycan is linked to Ser510. Positions 530–571 (DIDECLQNGRICNNGRCINTDGSFHCVCNAGFHVTRDGKNCE) constitute an EGF-like 8; calcium-binding domain. O-linked (Glc) serine glycosylation is present at Ser552. The EGF-like 9; calcium-binding domain maps to 572–612 (DMDECSIRNMCLNGMCINEDGSFKCICKPGFQLASDGRYCK). O-linked (Glc) serine glycosylation is present at Ser593. The EGF-like 10; calcium-binding domain maps to 613 to 653 (DINECETPGICMNGRCVNTDGSYRCECFPGLAVGLDGRVCV). Ser634 carries an O-linked (Glc) serine glycan. Residues 659 to 711 (STCYGGYKRGQCIKPLFGAVTKSECCCASTEYAFGEPCQPCPAQNSAEYQALC) form the TB 3 domain. Residues 723 to 764 (DINECALDPDICPNGICENLRGTYKCICNSGYEVDSTGKNCV) enclose the EGF-like 11; calcium-binding domain. Disulfide bonds link Cys727-Cys739, Cys734-Cys748, Cys750-Cys763, Cys769-Cys781, Cys776-Cys790, Cys792-Cys805, Cys811-Cys821, Cys816-Cys830, Cys832-Cys845, Cys853-Cys875, Cys862-Cys887, Cys876-Cys890, Cys896-Cys908, Cys914-Cys926, Cys921-Cys935, and Cys937-Cys950. The EGF-like 12; calcium-binding domain maps to 765–806 (DINECVLNSLLCDNGQCRNTPGSFVCTCPKGFIYKPDLKTCE). O-linked (Glc) serine glycosylation occurs at Ser787. Positions 807 to 846 (DIDECESSPCINGVCKNSPGSFICECSSESTLDPTKTICI) constitute an EGF-like 13; calcium-binding domain. O-linked (Glc) serine glycosylation occurs at Ser827. Positions 851-902 (GTCWQTVIDGRCEININGATLKSQCCSSLGAAWGSPCTLCQVDPICGKGYSR) constitute a TB 4 domain. Residues 862–887 (CEININGATLKSQCCSSLGAAWGSPC) form a hybrid domain 2 region. One can recognise an EGF-like 14; calcium-binding domain in the interval 910 to 951 (DIDECEVFPGVCKNGLCVNTRGSFKCQCPSGMTLDATGRICL). Positions 956–1008 (ETCFLRYEDEECTLPIAGRHRMDACCCSVGAAWGTEECEECPMRNTPEYEELC) constitute a TB 5 domain. Positions 1028–1069 (DINECKMIPSLCTHGKCRNTIGSFKCRCDSGFALDSEERNCT) constitute an EGF-like 15; calcium-binding domain. Disulfide bonds link Cys1032/Cys1044, Cys1039/Cys1053, Cys1055/Cys1068, Cys1074/Cys1086, Cys1081/Cys1095, Cys1097/Cys1111, Cys1117/Cys1129, Cys1124/Cys1138, Cys1140/Cys1153, Cys1159/Cys1171, Cys1166/Cys1180, Cys1182/Cys1195, Cys1201/Cys1212, Cys1208/Cys1221, Cys1223/Cys1236, Cys1242/Cys1254, Cys1249/Cys1263, Cys1265/Cys1278, Cys1284/Cys1296, Cys1291/Cys1305, Cys1307/Cys1320, Cys1326/Cys1339, Cys1333/Cys1348, Cys1350/Cys1361, Cys1367/Cys1380, Cys1374/Cys1389, Cys1391/Cys1402, Cys1408/Cys1420, Cys1415/Cys1429, Cys1431/Cys1444, Cys1450/Cys1461, Cys1456/Cys1470, Cys1472/Cys1485, Cys1491/Cys1502, Cys1497/Cys1511, Cys1513/Cys1526, Cys1534/Cys1562, Cys1549/Cys1574, Cys1563/Cys1577, Cys1564/Cys1589, Cys1610/Cys1622, Cys1617/Cys1631, Cys1633/Cys1646, Cys1652/Cys1663, Cys1658/Cys1672, and Cys1674/Cys1687. O-linked (Glc) serine glycosylation occurs at Ser1050. N-linked (GlcNAc...) asparagine glycosylation occurs at Asn1067. Residues 1070–1112 (DIDECRISPDLCGRGQCVNTPGDFECKCDEGYESGFMMMKNCM) enclose the EGF-like 16; calcium-binding domain. Residues 1113 to 1154 (DIDECQRDPLLCRGGVCHNTEGSYRCECPPGHQLSPNISACI) enclose the EGF-like 17; calcium-binding domain. An O-linked (Glc) serine glycan is attached at Ser1135. An N-linked (GlcNAc...) asparagine glycan is attached at Asn1149. The EGF-like 18; calcium-binding domain maps to 1155–1196 (DINECELSAHLCPNGRCVNLIGKYQCACNPGYHSTPDRLFCV). The region spanning 1197–1237 (DIDECSIMNGGCETFCTNSEGSYECSCQPGFALMPDQRSCT) is the EGF-like 19; calcium-binding domain. Ser1218 is a glycosylation site (O-linked (Glc) serine). The EGF-like 20; calcium-binding domain maps to 1238–1279 (DIDECEDNPNICDGGQCTNIPGEYRCLCYDGFMASEDMKTCV). Residues 1280-1321 (DVNECDLNPNICLSGTCENTKGSFICHCDMGYSGKKGKTGCT) enclose the EGF-like 21; calcium-binding domain. A glycan (O-linked (Glc) serine) is linked at Ser1302. An EGF-like 22; calcium-binding domain is found at 1322–1362 (DINECEIGAHNCGKHAVCTNTAGSFKCSCSPGWIGDGIKCT). O-linked (Glc) serine glycosylation is present at Ser1345. The 41-residue stretch at 1363–1403 (DLDECSNGTHMCSQHADCKNTMGSYRCLCKEGYTGDGFTCT) folds into the EGF-like 23; calcium-binding domain. An N-linked (GlcNAc...) asparagine glycan is attached at Asn1369. A glycan (O-linked (Glc) serine) is linked at Ser1386. The EGF-like 24; calcium-binding domain maps to 1404–1445 (DLDECSENLNLCGNGQCLNAPGGYRCECDMGFVPSADGKACE). An EGF-like 25; calcium-binding domain is found at 1446 to 1486 (DIDECSLPNICVFGTCHNLPGLFRCECEIGYELDRSGGNCT). Residue Asn1484 is glycosylated (N-linked (GlcNAc...) asparagine). In terms of domain architecture, EGF-like 26; calcium-binding spans 1487–1527 (DVNECLDPTTCISGNCVNTPGSYICDCPPDFELNPTRVGCV). Ser1508 carries O-linked (Glc) serine glycosylation. A C-terminal domain region spans residues 1528–2731 (DTRSGNCYLD…GYPKRGRKRR (1204 aa)). A TB 6 domain is found at 1532–1589 (GNCYLDIRPRGDNGDTACSNEIGVGVSKASCCCSLGKAWGTPCEMCPAVNTSEYKILC). A Cell attachment site motif is present at residues 1541–1543 (RGD). An N-linked (GlcNAc...) asparagine glycan is attached at Asn1581. Positions 1606–1647 (DIDECQELPGLCQGGKCINTFGSFQCRCPTGYYLNEDTRVCD) constitute an EGF-like 27; calcium-binding domain. O-linked (Glc) serine glycosylation occurs at Ser1628. The EGF-like 28; calcium-binding domain maps to 1648–1688 (DVNECETPGICGPGTCYNTVGNYTCICPPDYMQVNGGNNCM). Residue Asn1669 is glycosylated (N-linked (GlcNAc...) asparagine). The TB 7 domain maps to 1693–1748 (SLCYRNYYADNQTCDGELLFNMTKKMCCCSYNIGRAWNKPCEQCPIPSTDEFATLC). N-linked (GlcNAc...) asparagine glycosylation is found at Asn1703 and Asn1713. The EGF-like 29; calcium-binding domain maps to 1766–1807 (DIDECREIPGVCENGVCINMVGSFRCECPVGFFYNDKLLVCE). Disulfide bonds link Cys1770–Cys1782, Cys1777–Cys1791, Cys1793–Cys1806, Cys1812–Cys1824, Cys1818–Cys1833, Cys1835–Cys1847, Cys1853–Cys1865, Cys1860–Cys1874, Cys1876–Cys1889, Cys1895–Cys1905, Cys1900–Cys1914, Cys1916–Cys1928, Cys1934–Cys1947, Cys1942–Cys1956, Cys1958–Cys1971, Cys1977–Cys1989, Cys1984–Cys1998, Cys2000–Cys2011, Cys2017–Cys2029, Cys2024–Cys2038, Cys2040–Cys2053, Cys2061–Cys2083, Cys2070–Cys2096, Cys2084–Cys2099, Cys2085–Cys2111, Cys2131–Cys2142, Cys2137–Cys2151, Cys2153–Cys2164, Cys2170–Cys2181, Cys2176–Cys2190, Cys2192–Cys2204, Cys2210–Cys2221, Cys2217–Cys2230, Cys2232–Cys2245, Cys2251–Cys2265, Cys2258–Cys2274, Cys2276–Cys2289, Cys2295–Cys2307, Cys2302–Cys2316, and Cys2318–Cys2331. The EGF-like 30; calcium-binding domain maps to 1808 to 1848 (DIDECQNGPVCQRNAECINTAGSYRCDCKPGYRFTSTGQCN). An O-linked (Glc) serine glycan is attached at Ser1830. The EGF-like 31; calcium-binding domain occupies 1849 to 1890 (DRNECQEIPNICSHGQCIDTVGSFYCLCHTGFKTNDDQTMCL). Residue Ser1871 is glycosylated (O-linked (Glc) serine). One can recognise an EGF-like 32; calcium-binding domain in the interval 1891 to 1929 (DINECERDACGNGTCRNTIGSFNCRCNHGFILSHNNDCI). Asn1902 carries N-linked (GlcNAc...) asparagine glycosylation. Residue Ser1911 is glycosylated (O-linked (Glc) serine). In terms of domain architecture, EGF-like 33; calcium-binding spans 1930–1972 (DVDECASGNGNLCRNGQCINTVGSFQCQCNEGYEVAPDGRTCV). An O-linked (Glc) serine glycan is attached at Ser1953. The region spanning 1973–2012 (DINECLLEPRKCAPGTCQNLDGSYRCICPPGYSLQNEKCE) is the EGF-like 34; calcium-binding domain. One can recognise an EGF-like 35; calcium-binding domain in the interval 2013 to 2054 (DIDECVEEPEICALGTCSNTEGSFKCLCPEGFSLSSSGRRCQ). O-linked (Glc) serine glycosylation occurs at Ser2035. Positions 2059–2111 (SYCYAKFEGGKCSSPKSRNHSKQECCCALKGEGWGDPCELCPTEPDEAFRQIC) constitute a TB 8 domain. Asn2077 carries an N-linked (GlcNAc...) asparagine glycan. The 39-residue stretch at 2127–2165 (DMDECKEPDVCKHGQCINTDGSYRCECPFGYILAGNECV) folds into the EGF-like 36; calcium-binding domain. Ser2148 is a glycosylation site (O-linked (Glc) serine). The region spanning 2166–2205 (DTDECSVGNPCGNGTCKNVIGGFECTCEEGFEPGPMMTCE) is the EGF-like 37; calcium-binding domain. The N-linked (GlcNAc...) asparagine glycan is linked to Asn2178. In terms of domain architecture, EGF-like 38; calcium-binding spans 2206–2246 (DINECAQNPLLCAFRCVNTYGSYECKCPVGYVLREDRRMCK). Residue Ser2227 is glycosylated (O-linked (Glc) serine). An EGF-like 39; calcium-binding domain is found at 2247–2290 (DEDECEEGKHDCTEKQMECKNLIGTYMCICGPGYQRRPDGEGCV). One can recognise an EGF-like 40; calcium-binding domain in the interval 2291–2332 (DENECQTKPGICENGRCLNTRGSYTCECNDGFTASPNQDECL). Ser2313 is a glycosylation site (O-linked (Glc) serine). The 54-residue stretch at 2337-2390 (GYCFTEVLQNMCQIGSSNRNPVTKSECCCDGGRGWGPHCEICPFQGTVAFKKLC) folds into the TB 9 domain. An EGF-like 41; calcium-binding domain is found at 2402–2443 (DIDECKVIHDVCRNGECVNDRGSYHCICKTGYTPDITGTSCV). 21 cysteine pairs are disulfide-bonded: Cys2406–Cys2418, Cys2413–Cys2427, Cys2429–Cys2442, Cys2448–Cys2459, Cys2455–Cys2468, Cys2470–Cys2483, Cys2489–Cys2500, Cys2496–Cys2509, Cys2511–Cys2522, Cys2528–Cys2541, Cys2535–Cys2550, Cys2552–Cys2565, Cys2571–Cys2581, Cys2577–Cys2590, Cys2592–Cys2605, Cys2611–Cys2622, Cys2617–Cys2631, Cys2633–Cys2646, Cys2652–Cys2663, Cys2659–Cys2672, and Cys2674–Cys2686. The EGF-like 42; calcium-binding domain maps to 2444–2484 (DLNECNQAPKPCNFICKNTEGSYQCSCPKGYILQEDGRSCK). A glycan (O-linked (Glc) serine) is linked at Ser2465. An EGF-like 43; calcium-binding domain is found at 2485-2523 (DLDECATKQHNCQFLCVNTIGGFTCKCPPGFTQHHTSCI). The EGF-like 44; calcium-binding domain maps to 2524–2566 (DNNECTSDINLCGSKGICQNTPGSFTCECQRGFSLDQTGSSCE). O-linked (Glc) serine glycosylation occurs at Ser2547. Residues 2567 to 2606 (DVDECEGNHRCQHGCQNIIGGYRCSCPQGYLQHYQWNQCV) form the EGF-like 45; calcium-binding domain. The EGF-like 46; calcium-binding domain occupies 2607 to 2647 (DENECLSAHICGGASCHNTLGSYKCMCPAGFQYEQFSGGCQ). O-linked (Glc) serine glycosylation occurs at Ser2628. Positions 2648–2687 (DINECGSAQAPCSYGCSNTEGGYLCGCPPGYFRIGQGHCV) constitute an EGF-like 47; calcium-binding domain. Phosphoserine; by FAM20C is present on Ser2702. At Ser2709 the chain carries Phosphoserine. The segment at 2726 to 2746 (RGRKRRSTNETDASNIEDQSE) is disordered. N-linked (GlcNAc...) asparagine glycosylation is present at Asn2734. A compositionally biased stretch (polar residues) spans 2735-2746 (ETDASNIEDQSE). 2 N-linked (GlcNAc...) asparagine glycosylation sites follow: Asn2750 and Asn2767.

The protein belongs to the fibrillin family. As to quaternary structure, interacts with COL16A1. Interacts with integrin alpha-V/beta-3. Interacts with ADAMTS10; this interaction promotes microfibril assembly. Interacts with THSD4; this interaction promotes fibril formation. Interacts (via N-terminal domain) with FBLN2 and FBLN5. Interacts with ELN. Forms a ternary complex with ELN and FBLN2 or FBLN5 and a significant interaction with ELN seen only in the presence of FBLN2 or FBLN5. Interacts (via N-terminal domain) with LTBP2 (via C-terminal domain) in a Ca(+2)-dependent manner. Interacts (via N-terminal domain) with LTBP1 (via C-terminal domain). Interacts with integrins ITGA5:ITGB1, ITGAV:ITGB3 and ITGAV:ITGB6. Interacts (via N-terminal domain) with BMP2, BMP4, BMP7, BMP10 and GDF5. Interacts (via N-terminal domain) with MFAP2 and MFAP5. Interacts with ADAMTSL5. Interacts with MFAP4. Interacts (via N-terminal domain) with TNFSF11 in a Ca(+2)-dependent manner. Interacts (via N-terminal domain) with EFEMP2; this interaction inhibits EFEMP2 binding to LOX and ELN. Post-translationally, cleavage of N- and C-terminus by furin is required for incorporation into the extracellular matrix and assembly into microfibrils. The C-terminus, which corresponds to the Asprosin chain, was initially thought to constitute a propeptide. Fibrillin-1 and Asprosin chains are still linked together during the secretion from cells, but are subsequently separated by furin, an essential step for incorporation of Fibrillin-1 into the nascent microfibrils. In terms of processing, forms intermolecular disulfide bonds either with other fibrillin-1 molecules or with other components of the microfibrils. O-glycosylated on serine residues by POGLUT2 and POGLUT3 which is necessary for efficient protein secretion.

Its subcellular location is the secreted. It is found in the extracellular space. The protein localises to the extracellular matrix. Functionally, structural component of the 10-12 nm diameter microfibrils of the extracellular matrix, which conveys both structural and regulatory properties to load-bearing connective tissues. Fibrillin-1-containing microfibrils provide long-term force bearing structural support. In tissues such as the lung, blood vessels and skin, microfibrils form the periphery of the elastic fiber, acting as a scaffold for the deposition of elastin. In addition, microfibrils can occur as elastin-independent networks in tissues such as the ciliary zonule, tendon, cornea and glomerulus where they provide tensile strength and have anchoring roles. Fibrillin-1 also plays a key role in tissue homeostasis through specific interactions with growth factors, such as the bone morphogenetic proteins (BMPs), growth and differentiation factors (GDFs) and latent transforming growth factor-beta-binding proteins (LTBPs), cell-surface integrins and other extracellular matrix protein and proteoglycan components. Regulates osteoblast maturation by controlling TGF-beta bioavailability and calibrating TGF-beta and BMP levels, respectively. Negatively regulates osteoclastogenesis by binding and sequestering an osteoclast differentiation and activation factor TNFSF11. This leads to disruption of TNFSF11-induced Ca(2+) signaling and impairment of TNFSF11-mediated nuclear translocation and activation of transcription factor NFATC1 which regulates genes important for osteoclast differentiation and function. Mediates cell adhesion via its binding to cell surface receptors integrins ITGAV:ITGB3 and ITGA5:ITGB1. Binds heparin and this interaction has an important role in the assembly of microfibrils. In terms of biological role, adipokine secreted by white adipose tissue that plays an important regulatory role in the glucose metabolism of liver, muscle and pancreas. Hormone that targets the liver in response to fasting to increase plasma glucose levels. Binds the olfactory receptor OR4M1 at the surface of hepatocytes and promotes hepatocyte glucose release by activating the protein kinase A activity in the liver, resulting in rapid glucose release into the circulation. May act as a regulator of adaptive thermogenesis by inhibiting browning and energy consumption, while increasing lipid deposition in white adipose tissue. Also acts as an orexigenic hormone that increases appetite: crosses the blood brain barrier and exerts effects on the hypothalamus. In the arcuate nucleus of the hypothalamus, asprosin directly activates orexigenic AgRP neurons and indirectly inhibits anorexigenic POMC neurons, resulting in appetite stimulation. Activates orexigenic AgRP neurons via binding to the olfactory receptor OR4M1. May also play a role in sperm motility in testis via interaction with OR4M1 receptor. In Homo sapiens (Human), this protein is Fibrillin-1.